Consider the following 64-residue polypeptide: DNA-binding protein 7b (64 aa).

2 positions are modified to N6-methyllysine: lysine 5 and lysine 7.

It belongs to the 7 kDa DNA-binding/endoribonuclease P2 family. As to quaternary structure, monomer. Post-translationally, lys-5 and Lys-7 may be methylated.

The protein localises to the cytoplasm. Functionally, can constrain negative DNA supercoils. May be involved in maintaining the integrity of the genome at high temperature. The chain is DNA-binding protein 7b from Saccharolobus shibatae (strain ATCC 51178 / DSM 5389 / JCM 8931 / NBRC 15437 / B12) (Sulfolobus shibatae).